We begin with the raw amino-acid sequence, 67 residues long: Conotoxin Cl6.8 (67 aa).

An N-terminal signal peptide occupies residues 1-22; sequence MKVTAVLMVAVLVLTACQLTTA. A propeptide spanning residues 23–39 is cleaved from the precursor; that stretch reads NTTDYVRRILARKSTMS. 3 cysteine pairs are disulfide-bonded: Cys-43–Cys-58, Cys-50–Cys-62, and Cys-57–Cys-66. At Cys-66 the chain carries Cysteine amide.

The protein belongs to the conotoxin O1 superfamily. As to expression, expressed by the venom duct.

It localises to the secreted. The sequence is that of Conotoxin Cl6.8 from Californiconus californicus (California cone).